Here is a 625-residue protein sequence, read N- to C-terminus: Glucose dehydrogenase [FAD, quinone] (625 aa).

The signal sequence occupies residues methionine 1–serine 42. Aspartate 66–glutamate 95 serves as a coordination point for FAD. The active-site Proton acceptor is histidine 544. Position 613 (selenocysteine 613) is a non-standard amino acid, selenocysteine.

Belongs to the GMC oxidoreductase family. FAD is required as a cofactor.

The protein localises to the secreted. The catalysed reaction is a quinone + D-glucose = D-glucono-1,5-lactone + a quinol. The sequence is that of Glucose dehydrogenase [FAD, quinone] (Gld) from Drosophila pseudoobscura pseudoobscura (Fruit fly).